Consider the following 242-residue polypeptide: 2-C-methyl-D-erythritol 4-phosphate cytidylyltransferase (242 aa).

The protein belongs to the IspD/TarI cytidylyltransferase family. IspD subfamily.

The catalysed reaction is 2-C-methyl-D-erythritol 4-phosphate + CTP + H(+) = 4-CDP-2-C-methyl-D-erythritol + diphosphate. Its pathway is isoprenoid biosynthesis; isopentenyl diphosphate biosynthesis via DXP pathway; isopentenyl diphosphate from 1-deoxy-D-xylulose 5-phosphate: step 2/6. Its function is as follows. Catalyzes the formation of 4-diphosphocytidyl-2-C-methyl-D-erythritol from CTP and 2-C-methyl-D-erythritol 4-phosphate (MEP). This chain is 2-C-methyl-D-erythritol 4-phosphate cytidylyltransferase, found in Vesicomyosocius okutanii subsp. Calyptogena okutanii (strain HA).